Here is a 273-residue protein sequence, read N- to C-terminus: Ribosomal RNA small subunit methyltransferase A (273 aa).

6 residues coordinate S-adenosyl-L-methionine: asparagine 25, leucine 27, glycine 52, glutamate 73, aspartate 99, and asparagine 118.

It belongs to the class I-like SAM-binding methyltransferase superfamily. rRNA adenine N(6)-methyltransferase family. RsmA subfamily.

Its subcellular location is the cytoplasm. It carries out the reaction adenosine(1518)/adenosine(1519) in 16S rRNA + 4 S-adenosyl-L-methionine = N(6)-dimethyladenosine(1518)/N(6)-dimethyladenosine(1519) in 16S rRNA + 4 S-adenosyl-L-homocysteine + 4 H(+). Its function is as follows. Specifically dimethylates two adjacent adenosines (A1518 and A1519) in the loop of a conserved hairpin near the 3'-end of 16S rRNA in the 30S particle. May play a critical role in biogenesis of 30S subunits. This Novosphingobium aromaticivorans (strain ATCC 700278 / DSM 12444 / CCUG 56034 / CIP 105152 / NBRC 16084 / F199) protein is Ribosomal RNA small subunit methyltransferase A.